Consider the following 283-residue polypeptide: MELLQTIAAVRNYVAAARQRGLSIGLVPTMGYLHEGHLSLARAARQQNDVVIMSIFVNPTQFGPNEDFARYPRDLERDRELAAGAGVDAVFAPAVEEMYPAGYATYVQVEGLTEVLCGASRPGHFRGVTTVVSKLFNIVQPDRAYFGQKDYQQALVIKRMVRDLNFPIEIITIPTVREADGLALSSRNKYLTPEQRRSALSLHRALHLGSDLIKAGEREAAVVRRAMEKEITAWPETRIDYVAISDADTLKPLEKIAGRVLLALAVWVGNTRLIDNVVLEVND.

Position 30–37 (Met-30–His-37) interacts with ATP. Residue His-37 is the Proton donor of the active site. Gln-61 is a binding site for (R)-pantoate. Gln-61 is a beta-alanine binding site. Gly-147 to Asp-150 is a binding site for ATP. Gln-153 lines the (R)-pantoate pocket. Residues Val-176 and Leu-184 to Arg-187 contribute to the ATP site.

The protein belongs to the pantothenate synthetase family. Homodimer.

It is found in the cytoplasm. The enzyme catalyses (R)-pantoate + beta-alanine + ATP = (R)-pantothenate + AMP + diphosphate + H(+). It functions in the pathway cofactor biosynthesis; (R)-pantothenate biosynthesis; (R)-pantothenate from (R)-pantoate and beta-alanine: step 1/1. In terms of biological role, catalyzes the condensation of pantoate with beta-alanine in an ATP-dependent reaction via a pantoyl-adenylate intermediate. This chain is Pantothenate synthetase, found in Moorella thermoacetica (strain ATCC 39073 / JCM 9320).